The primary structure comprises 254 residues: Hydroxyacylglutathione hydrolase (254 aa).

Zn(2+) is bound by residues histidine 53, histidine 55, aspartate 57, histidine 58, histidine 111, aspartate 128, and histidine 166.

The protein belongs to the metallo-beta-lactamase superfamily. Glyoxalase II family. Monomer. Zn(2+) serves as cofactor.

It catalyses the reaction an S-(2-hydroxyacyl)glutathione + H2O = a 2-hydroxy carboxylate + glutathione + H(+). It functions in the pathway secondary metabolite metabolism; methylglyoxal degradation; (R)-lactate from methylglyoxal: step 2/2. In terms of biological role, thiolesterase that catalyzes the hydrolysis of S-D-lactoyl-glutathione to form glutathione and D-lactic acid. The chain is Hydroxyacylglutathione hydrolase from Aeromonas salmonicida (strain A449).